The primary structure comprises 848 residues: ATP-dependent Clp protease ATP-binding subunit ClpC1 (848 aa).

The Clp R domain maps to 2–144 (FERFTDRARK…RQQVIQLLSG (143 aa)). Repeat regions lie at residues 5–70 (FTDR…IGQG) and 80–144 (FTPR…LLSG). Residues 171 to 418 (LDQFGRNLTA…RMRIRRMTAP (248 aa)) are i. Residue 216–223 (GEPGVGKT) coordinates ATP. Residues 425-460 (DEKIAEARREKESAIDAQDFEKAASLRDREKTLVAQ) form the UVR domain. The segment at 479–670 (VDDEQIAEVL…VLIFTSNLGT (192 aa)) is II. Residue 553–560 (GPSGVGKT) coordinates ATP. The segment at 821 to 848 (TGTRKPPAEPDLAKAGAHSAGGPEPAAR) is disordered.

Belongs to the ClpA/ClpB family. ClpC subfamily.

Its function is as follows. ATP-dependent specificity component of the Clp protease. It directs the protease to specific substrates. Can perform chaperone functions in the absence of ClpP. The polypeptide is ATP-dependent Clp protease ATP-binding subunit ClpC1 (clpC1) (Mycobacterium tuberculosis (strain CDC 1551 / Oshkosh)).